We begin with the raw amino-acid sequence, 872 residues long: Dynein regulatory complex subunit 7 (872 aa).

Disordered stretches follow at residues 1 to 40 (MEVLKEKVEEEEAAEREEAAERAERGEKTKRPMEVRREET), 231 to 281 (ESVK…QEEA), and 385 to 410 (EEEDEGMNDDDDVENLGKEDEDKSFD). Positions 1-64 (MEVLKEKVEE…SEIEVSVPEK (64 aa)) form a coiled coil. Basic and acidic residues-rich tracts occupy residues 16 to 40 (REEAAERAERGEKTKRPMEVRREET), 231 to 240 (ESVKEEEKAP), and 248 to 281 (PPRDLTSRFEQEQEMKRQEAIKAEEENRRKQEEA). The stretch at 254 to 292 (SRFEQEQEMKRQEAIKAEEENRRKQEEARLLEQENAKTD) forms a coiled coil. Over residues 385–398 (EEEDEGMNDDDDVE) the composition is skewed to acidic residues. Positions 399–409 (NLGKEDEDKSF) are enriched in basic and acidic residues. Coiled-coil stretches lie at residues 676–706 (LKNEEKLSRHQAWESELEVLEILKLREEEEE) and 780–805 (QRLIDKANLIQARFEKETQELQKKQQ).

The protein belongs to the DRC7 family. As to quaternary structure, component of the nexin-dynein regulatory complex (N-DRC). Interacts with TCTE1/DRC5. Interacts with DRC3 and GAS8/DRC4.

The protein resides in the cell projection. It is found in the cilium. The protein localises to the flagellum. It localises to the cytoplasm. Its subcellular location is the cytoskeleton. The protein resides in the cilium axoneme. It is found in the flagellum axoneme. Its function is as follows. Component of the nexin-dynein regulatory complex (N-DRC) a key regulator of ciliary/flagellar motility which maintains the alignment and integrity of the distal axoneme and regulates microtubule sliding in motile axonemes. Involved in the regulation of flagellar motility. Essential for male fertility, sperm head morphogenesis and sperm flagellum formation. This is Dynein regulatory complex subunit 7 (DRC7) from Bos taurus (Bovine).